A 553-amino-acid chain; its full sequence is Putative transport protein Ent638_0015 (553 aa).

The next 5 membrane-spanning stretches (helical) occupy residues 4-24, 28-48, 65-85, 95-115, and 158-178; these read IALT…IGNI, GVGL…HFAE, FGLI…FFAS, LFAL…HKLF, and MSYA…MWLV. RCK C-terminal domains follow at residues 191-276 and 279-361; these read KKHE…VIGQ and ETSL…MVGN. 6 consecutive transmembrane segments (helical) span residues 371–391, 403–425, 439–459, 464–484, 493–513, and 533–553; these read MLPV…PLYV, AGGP…LYWF, IVLF…DTLA, ISWI…IGIL, YLTL…LAFA, and LVMF…WGMG.

This sequence belongs to the AAE transporter (TC 2.A.81) family. YidE subfamily.

The protein resides in the cell membrane. The protein is Putative transport protein Ent638_0015 of Enterobacter sp. (strain 638).